The following is a 575-amino-acid chain: Probable methionine--tRNA ligase, mitochondrial (575 aa).

The 'HIGH' region signature appears at 52-62 (FYVNGPPHIGH). The 'KMSKS' region motif lies at 352–356 (KMSKS). Residue Lys355 coordinates ATP.

Belongs to the class-I aminoacyl-tRNA synthetase family.

It is found in the mitochondrion matrix. The catalysed reaction is tRNA(Met) + L-methionine + ATP = L-methionyl-tRNA(Met) + AMP + diphosphate. The chain is Probable methionine--tRNA ligase, mitochondrial (mmetS) from Dictyostelium discoideum (Social amoeba).